Consider the following 311-residue polypeptide: Phosphoribosylamine--glycine ligase (311 aa).

One can recognise an ATP-grasp domain in the interval 1 to 191 (DPRVRKQYIQ…LVQVLLAACR (191 aa)).

The protein belongs to the GARS family.

The protein resides in the plastid. It localises to the chloroplast. It catalyses the reaction 5-phospho-beta-D-ribosylamine + glycine + ATP = N(1)-(5-phospho-beta-D-ribosyl)glycinamide + ADP + phosphate + H(+). It functions in the pathway purine metabolism; IMP biosynthesis via de novo pathway; N(1)-(5-phospho-D-ribosyl)glycinamide from 5-phospho-alpha-D-ribose 1-diphosphate: step 2/2. The protein is Phosphoribosylamine--glycine ligase (PUR2) of Vigna unguiculata (Cowpea).